The sequence spans 450 residues: Chitobiosyldiphosphodolichol beta-mannosyltransferase (450 aa).

Residues 1–13 are Lumenal-facing; it reads MSWIQIPWSWVVT. The helical transmembrane segment at 14 to 34 threads the bilayer; the sequence is LIVTYLSLPLIIYYLVPYIFY. The Cytoplasmic portion of the chain corresponds to 35-106; it reads GNKSSKKRII…PTLTLQGNKR (72 aa). The helical intramembrane region spans 107 to 127; it reads SIIFLVKKVLFQVSAIIAQLW. The Cytoplasmic portion of the chain corresponds to 128–450; it reads ELRGSNYMLI…SAMQELKLVA (323 aa).

This sequence belongs to the glycosyltransferase group 1 family.

It localises to the endoplasmic reticulum membrane. The catalysed reaction is an N,N'-diacetylchitobiosyl-diphospho-di-trans,poly-cis-dolichol + GDP-alpha-D-mannose = a beta-D-Man-(1-&gt;4)-beta-D-GlcNAc-(1-&gt;4)-alpha-D-GlcNAc-diphospho-di-trans,poly-cis-dolichol + GDP + H(+). It functions in the pathway protein modification; protein glycosylation. Its function is as follows. Participates in the formation of the lipid-linked precursor oligosaccharide for N-glycosylation. Involved in assembling the dolichol-pyrophosphate-GlcNAc(2)-Man(5) intermediate on the cytoplasmic surface of the ER. The sequence is that of Chitobiosyldiphosphodolichol beta-mannosyltransferase (ALG1) from Candida glabrata (strain ATCC 2001 / BCRC 20586 / JCM 3761 / NBRC 0622 / NRRL Y-65 / CBS 138) (Yeast).